The chain runs to 588 residues: Aspartate--tRNA ligase (588 aa).

E177 serves as a coordination point for L-aspartate. The tract at residues 201 to 204 is aspartate; it reads QLFK. R223 is an L-aspartate binding site. Residues 223-225 and Q232 contribute to the ATP site; that span reads RDE. Position 451 (H451) interacts with L-aspartate. E485 is a binding site for ATP. R492 serves as a coordination point for L-aspartate. 537–540 serves as a coordination point for ATP; it reads GLDR.

This sequence belongs to the class-II aminoacyl-tRNA synthetase family. Type 1 subfamily. Homodimer.

Its subcellular location is the cytoplasm. It carries out the reaction tRNA(Asp) + L-aspartate + ATP = L-aspartyl-tRNA(Asp) + AMP + diphosphate. Its function is as follows. Catalyzes the attachment of L-aspartate to tRNA(Asp) in a two-step reaction: L-aspartate is first activated by ATP to form Asp-AMP and then transferred to the acceptor end of tRNA(Asp). The protein is Aspartate--tRNA ligase of Staphylococcus epidermidis (strain ATCC 35984 / DSM 28319 / BCRC 17069 / CCUG 31568 / BM 3577 / RP62A).